A 273-amino-acid chain; its full sequence is Transposable element Tcb1 transposase (273 aa).

Belongs to the transposase 5 family.

It localises to the nucleus. Functionally, probably essential for transposable element Tcb1 transposition. The insertion of Tcb1 is the main cause of spontaneous mutations. This Caenorhabditis briggsae protein is Transposable element Tcb1 transposase.